The following is a 437-amino-acid chain: MAAGTLYTYPENWRAFKALIAAQYSGAQIRVLSAPPHFHFGQTNRTPEFLRKFPAGKVPAFEGDDGFCVFESNAIAYYVSNEELRGSTPEAAAQVVQWVSFADSDIVPPASTWVFPTLGIMHHNKQATENAKEEVKRILGLLDTHLKTRTFLVGERVTLADITVVCTLLWLYKQVLEPSFRQAFPNTNRWFLTCINQPQFRAILGEVKLCEKMAQFDAKKFAESQPKKDTPRKEKGSREEKQKPQTERKEEKKAAAPAPEEEMDECEQALAAEPKAKDPFAHLPKSTFVLDEFKRKYSNEDTLSVALPYFWEHFDKDGWSLWYAEYRFPEELTQTFMSCNLITGMFQRLDKLRKNAFASVILFGTNNSSSISGVWVFRGQDLAFPLSPDWQVDYESYTWRKLDPGSEETQTLVREYFSWEGAFQHVGKAVNQGKIFK.

N-acetylalanine is present on alanine 2. The region spanning 2–87 (AAGTLYTYPE…YVSNEELRGS (86 aa)) is the GST N-terminal domain. The 129-residue stretch at 88-216 (TPEAAAQVVQ…VKLCEKMAQF (129 aa)) folds into the GST C-terminal domain. Lysine 147 and lysine 212 each carry N6-acetyllysine. Basic and acidic residues predominate over residues 221 to 254 (FAESQPKKDTPRKEKGSREEKQKPQTERKEEKKA). The interval 221-268 (FAESQPKKDTPRKEKGSREEKQKPQTERKEEKKAAAPAPEEEMDECEQ) is disordered. Lysine 253 is covalently cross-linked (Glycyl lysine isopeptide (Lys-Gly) (interchain with G-Cter in SUMO1)). The region spanning 276-437 (AKDPFAHLPK…KAVNQGKIFK (162 aa)) is the EF-1-gamma C-terminal domain. A Glycyl lysine isopeptide (Lys-Gly) (interchain with G-Cter in SUMO2) cross-link involves residue lysine 285. Lysine 401 carries the post-translational modification N6-acetyllysine. The residue at position 434 (lysine 434) is an N6-acetyllysine; alternate. Lysine 434 is modified (N6-malonyllysine; alternate).

As to quaternary structure, EF-1 is composed of four subunits: alpha, beta, delta, and gamma.

Probably plays a role in anchoring the complex to other cellular components. The polypeptide is Elongation factor 1-gamma (Eef1g) (Rattus norvegicus (Rat)).